A 249-amino-acid chain; its full sequence is Carbohydrate deacetylase (249 aa).

Residues His-60 and His-125 each coordinate Mg(2+).

The protein belongs to the YdjC deacetylase family. Homodimer. Mg(2+) serves as cofactor.

Its function is as follows. Probably catalyzes the deacetylation of acetylated carbohydrates an important step in the degradation of oligosaccharides. This is Carbohydrate deacetylase from Thermoanaerobacter pseudethanolicus (strain ATCC 33223 / 39E) (Clostridium thermohydrosulfuricum).